Here is a 416-residue protein sequence, read N- to C-terminus: Adenylosuccinate synthetase (416 aa).

GTP contacts are provided by residues 13–19 (GDEGKGK) and 41–43 (GHT). Residue Asp-14 is the Proton acceptor of the active site. Mg(2+)-binding residues include Asp-14 and Gly-41. IMP-binding positions include 14–17 (DEGK), 39–42 (NAGH), Thr-126, Arg-140, Gln-220, Thr-235, and Arg-299. His-42 acts as the Proton donor in catalysis. Residue 295–301 (TTTGRKR) coordinates substrate. Residues Arg-301, 327-329 (KLD), and 405-407 (STS) each bind GTP.

Belongs to the adenylosuccinate synthetase family. Homodimer. Mg(2+) is required as a cofactor.

It is found in the cytoplasm. The catalysed reaction is IMP + L-aspartate + GTP = N(6)-(1,2-dicarboxyethyl)-AMP + GDP + phosphate + 2 H(+). The protein operates within purine metabolism; AMP biosynthesis via de novo pathway; AMP from IMP: step 1/2. Plays an important role in the de novo pathway of purine nucleotide biosynthesis. Catalyzes the first committed step in the biosynthesis of AMP from IMP. In Campylobacter fetus subsp. fetus (strain 82-40), this protein is Adenylosuccinate synthetase.